The following is a 349-amino-acid chain: MIAFDQLTWLHGKPQSSGLLKANPEDFLVVEDLGFAPDGEGEHVLVRILKNGCNTRFVADALAKFLKIHAREVSFAGQKDKHAVTEQWLCARVPGKEMPDLSKFQLEGCQVLEYARHKRKLRLGALKGNQFTVILREISDRQDVETRLQAIAERGVPNYFGAQRFGIGGSNLQGALRWAESGAPVRDRNKRSFWLSAARSALFNQQVSIRLKKTEFNQVVDGDALQLAGRGSWFVVTPEELEVSQARVHNRELMITATLPGSGDWGSQRDALAFEQAAIAEETALQALLVREKVEAARRAMLLYPQQLSWNWWDDVTVELRFWLPAGSFATSVVRELINTTGDYANIAE.

Phenylalanine 27 serves as a coordination point for substrate. The active-site Nucleophile is the aspartate 80. Residue asparagine 129 coordinates substrate. The region spanning 155–303 (GVPNYFGAQR…VEAARRAMLL (149 aa)) is the TRUD domain. A substrate-binding site is contributed by phenylalanine 329.

Belongs to the pseudouridine synthase TruD family.

It catalyses the reaction uridine(13) in tRNA = pseudouridine(13) in tRNA. In terms of biological role, responsible for synthesis of pseudouridine from uracil-13 in transfer RNAs. The polypeptide is tRNA pseudouridine synthase D (Klebsiella pneumoniae subsp. pneumoniae (strain ATCC 700721 / MGH 78578)).